A 145-amino-acid chain; its full sequence is D-aminoacyl-tRNA deacylase (145 aa).

The short motif at G137–P138 is the Gly-cisPro motif, important for rejection of L-amino acids element.

The protein belongs to the DTD family. As to quaternary structure, homodimer.

The protein localises to the cytoplasm. It carries out the reaction glycyl-tRNA(Ala) + H2O = tRNA(Ala) + glycine + H(+). It catalyses the reaction a D-aminoacyl-tRNA + H2O = a tRNA + a D-alpha-amino acid + H(+). In terms of biological role, an aminoacyl-tRNA editing enzyme that deacylates mischarged D-aminoacyl-tRNAs. Also deacylates mischarged glycyl-tRNA(Ala), protecting cells against glycine mischarging by AlaRS. Acts via tRNA-based rather than protein-based catalysis; rejects L-amino acids rather than detecting D-amino acids in the active site. By recycling D-aminoacyl-tRNA to D-amino acids and free tRNA molecules, this enzyme counteracts the toxicity associated with the formation of D-aminoacyl-tRNA entities in vivo and helps enforce protein L-homochirality. The sequence is that of D-aminoacyl-tRNA deacylase from Francisella tularensis subsp. holarctica (strain FTNF002-00 / FTA).